A 377-amino-acid chain; its full sequence is Guanine nucleotide-binding protein subunit alpha-13 (377 aa).

S-palmitoyl cysteine attachment occurs at residues C14 and C18. The G-alpha domain maps to 47–377; the sequence is RLVKILLLGA…HDNLKQLMLQ (331 aa). A G1 motif region spans residues 50–63; that stretch reads KILLLGAGESGKST. Residues 58-63, S173, and 197-200 contribute to the GTP site; these read ESGKST and LLAR. S62 serves as a coordination point for Mg(2+). A G2 motif region spans residues 195–203; the sequence is DILLARRPT. T203 lines the Mg(2+) pocket. The residue at position 203 (T203) is a Phosphothreonine; by PKA. Residues 218–227 form a G3 motif region; the sequence is FKMVDVGGQR. The G4 motif stretch occupies residues 287–294; the sequence is ILFLNKTD. Residues 291–294 and A349 contribute to the GTP site; that span reads NKTD. Residues 347–352 are G5 motif; the sequence is TTAINT.

The protein belongs to the G-alpha family. G(12) subfamily. In terms of assembly, g proteins are composed of 3 units; alpha, beta and gamma. The alpha chain contains the guanine nucleotide binding site. Interacts with UBXD5. Interacts with HAX1. Interacts (in GTP-bound form) with PPP5C (via TPR repeats); activates PPP5C phosphatase activity and translocates PPP5C to the cell membrane. Interacts with RGS22. Interacts with ARHGEF1. Interacts (in GTP-bound form) with ARHGEF11 (via RGS domain). Interacts (in GTP-bound form) with ARHGEF12 (via RGS domain). Interacts (in GTP-bound form) with CTNND1. Interacts with GAS2L2. Interacts with GPR35. Interacts with GPR174. In terms of processing, palmitoylation is critical for proper membrane localization and signaling. Post-translationally, phosphorylation on Thr-203 by PKA destabilizes the heterotrimer of alpha, beta and gamma, and inhibits Rho activation.

It localises to the membrane. The protein localises to the melanosome. It is found in the cytoplasm. The protein resides in the nucleus. Its function is as follows. Guanine nucleotide-binding proteins (G proteins) are involved as modulators or transducers in various transmembrane signaling systems. Activates effector molecule RhoA by binding and activating RhoGEFs (ARHGEF1/p115RhoGEF, ARHGEF11/PDZ-RhoGEF and ARHGEF12/LARG). GNA13-dependent Rho signaling subsequently regulates transcription factor AP-1 (activating protein-1). Promotes tumor cell invasion and metastasis by activating RhoA/ROCK signaling pathway. Inhibits CDH1-mediated cell adhesion in process independent from Rho activation. In lymphoid follicles, transmits P2RY8- and S1PR2-dependent signals that lead to inhibition of germinal center (GC) B cell growth and migration outside the GC niche. This chain is Guanine nucleotide-binding protein subunit alpha-13 (Gna13), found in Rattus norvegicus (Rat).